Here is a 316-residue protein sequence, read N- to C-terminus: Retron Ec73 reverse transcriptase (316 aa).

The Reverse transcriptase domain occupies 1-243; the sequence is MRIYSLIDSQ…GSIVVTGLKV (243 aa). Aspartate 99, aspartate 189, and aspartate 190 together coordinate Mg(2+). A necessary and required for recognition and binding of RNA region spans residues 247-316; that stretch reads FHITLHRSMK…WIQNLHNKVE (70 aa).

It belongs to the bacterial reverse transcriptase family.

The catalysed reaction is DNA(n) + a 2'-deoxyribonucleoside 5'-triphosphate = DNA(n+1) + diphosphate. Its function is as follows. Reverse transcriptase (RT) component of antiviral defense system retron Ec73, composed of a non-coding RNA (ncRNA) followed by a ribosyltransferase/DNA-binding protein then a reverse transcriptase (RT). Expression of this retron confers protection against bacteriophages SECphi4, SECphi6, SECphi27 and P1. At multiplicity of infection (MOI) of 0.02 cultures grow normally when infected with SECphi4 without collapsing, at MOI 2 cultures enter growth stasis. Responsible for synthesis of msDNA-Ec73 (a branched molecule with RNA linked by a 2',5'-phosphodiester bond to ssDNA). The retron transcript serves as primer (from a conserved internal G residue) and template for the reaction, and codes for the RT. Recognizes only its cognate RNA as a primer template. The polypeptide is Retron Ec73 reverse transcriptase (Escherichia coli).